Consider the following 351-residue polypeptide: Apolipoprotein L4 (351 aa).

The N-terminal stretch at 1–21 (MEGAALLKIFVVCIWVQQNHP) is a signal peptide.

The protein belongs to the apolipoprotein L family. As to expression, widely expressed; the highest levels are in spinal cord, placenta, adrenal gland; also detected in spleen, bone marrow, uterus, trachea, mammary gland and testis; levels are low in brain, heart and pancreas.

It localises to the secreted. Its function is as follows. May play a role in lipid exchange and transport throughout the body. May participate in reverse cholesterol transport from peripheral cells to the liver. This Homo sapiens (Human) protein is Apolipoprotein L4 (APOL4).